The chain runs to 639 residues: Serine protease HtrA-like (639 aa).

Composition is skewed to basic and acidic residues over residues 1–13 (MDND…PREQ), 21–75 (YFHN…EIHQ), 106–187 (QQLK…KESS), and 195–205 (KSQKIEQKEQK). Positions 1–262 (MDNDKKHVIP…LENEPKNNDT (262 aa)) are disordered. A compositionally biased stretch (polar residues) spans 206-219 (ASSNETSNKELNSY). 2 stretches are compositionally biased toward basic and acidic residues: residues 220–235 (TKDK…DLKK) and 245–262 (NKLE…NNDT). A helical transmembrane segment spans residues 277 to 297 (IVIVVAIILIVILISAIISTM). Catalysis depends on charge relay system residues His374, Asp404, and Ser489. Residues 527–629 (EIAEELEKKG…TLSAKIYREG (103 aa)) form the PDZ domain.

This sequence belongs to the peptidase S1C family.

It localises to the cell membrane. The chain is Serine protease HtrA-like from Staphylococcus haemolyticus (strain JCSC1435).